The following is a 472-amino-acid chain: Velvet complex subunit umv2 (472 aa).

4 stretches are compositionally biased toward basic and acidic residues: residues 1-10 (MSRSDTDGRD), 29-59 (SQRRERPDYGYAVEETHRPHTAQERFPDSHG), 67-80 (YSRDSDRFSYHRGD), and 89-105 (SYQRELELMKARGEQER). 3 disordered regions span residues 1–121 (MSRS…PLEA), 281–327 (CDDG…QFGG), and 433–472 (SQGIKIPVRNDKKKQRRRNDEGGDGMGDYDGASGGDEDDE). A compositionally biased stretch (low complexity) spans 106–116 (SYGGASASRSS). Residues 158 to 441 (ENGRRYRLVV…ASQGIKIPVR (284 aa)) enclose the Velvet domain. Over residues 286–298 (RSSTHPQHASEST) the composition is skewed to polar residues. Residues 456–466 (DGMGDYDGASG) are compositionally biased toward gly residues.

Belongs to the velvet family. VelB subfamily. Component of the heterotrimeric velvet complex composed of laeA, veA and velB; VeA acting as a bridging protein between laeA and velB. Forms a heterodimeric complex with vosA; the formation of the velB-vosA complex is light-dependent.

It is found in the nucleus. Its subcellular location is the cytoplasm. Functionally, component of the velvet transcription factor complex that controls sexual/asexual developmental ratio in response to light, promoting sexual development in the darkness while stimulating asexual sporulation under illumination. The velvet complex acts as a global regulator for secondary metabolite gene expression. Component of the velB-VosA heterodimeric complex that plays a dual role in activating genes associated with spore maturation and repressing certain development-associated genes. The velB-VosA complex binds DNA through the DNA-binding domain of vosA that recognizes an 11-nucleotide consensus sequence 5'-CTGGCCGCGGC-3' consisting of two motifs in the promoters of key developmental regulatory genes. Required for full virulence on seedlings. This Mycosarcoma maydis (Corn smut fungus) protein is Velvet complex subunit umv2.